We begin with the raw amino-acid sequence, 247 residues long: Granzyme B (247 aa).

A signal peptide spans 1–18; it reads MQPILLLLAFLLLPRADA. Positions 19-20 are cleaved as a propeptide — activation peptide; sequence GE. Residues 21–245 enclose the Peptidase S1 domain; it reads IIGGHEAKPH…FVHWIKKTMK (225 aa). Residues Cys-49 and Cys-65 are joined by a disulfide bond. His-64 functions as the Charge relay system in the catalytic mechanism. N-linked (GlcNAc...) asparagine glycosylation is found at Asn-71 and Asn-104. The Charge relay system role is filled by Asp-108. Disulfide bonds link Cys-142–Cys-209 and Cys-173–Cys-188. The Charge relay system role is filled by Ser-203.

It belongs to the peptidase S1 family. Granzyme subfamily.

The protein localises to the secreted. It localises to the cytolytic granule. The catalysed reaction is Preferential cleavage: -Asp-|-Xaa- &gt;&gt; -Asn-|-Xaa- &gt; -Met-|-Xaa-, -Ser-|-Xaa-.. Its activity is regulated as follows. Inactivated by the serine protease inhibitor diisopropylfluorophosphate. Functionally, abundant protease in the cytosolic granules of cytotoxic T-cells and NK-cells which activates caspase-independent pyroptosis when delivered into the target cell through the immunological synapse. It cleaves after Asp. Once delivered into the target cell, acts by catalyzing cleavage of gasdermin-E (GSDME), releasing the pore-forming moiety of GSDME, thereby triggering pyroptosis and target cell death. Seems to be linked to an activation cascade of caspases (aspartate-specific cysteine proteases) responsible for apoptosis execution. Cleaves caspase-3, -9 and -10 (CASP3, CASP9 and CASP10, respectively) to give rise to active enzymes mediating apoptosis. Cleaves and activates CASP7 in response to bacterial infection, promoting plasma membrane repair. The protein is Granzyme B of Homo sapiens (Human).